We begin with the raw amino-acid sequence, 138 residues long: Putative pre-16S rRNA nuclease (138 aa).

It belongs to the YqgF nuclease family.

The protein localises to the cytoplasm. Could be a nuclease involved in processing of the 5'-end of pre-16S rRNA. The protein is Putative pre-16S rRNA nuclease of Enterobacter sp. (strain 638).